We begin with the raw amino-acid sequence, 226 residues long: UPF0111 protein HI_1603 (226 aa).

The protein belongs to the UPF0111 family.

This is UPF0111 protein HI_1603 from Haemophilus influenzae (strain ATCC 51907 / DSM 11121 / KW20 / Rd).